The chain runs to 85 residues: U4-theraphotoxin-Hhn1a (85 aa).

An N-terminal signal peptide occupies residues 1 to 22 (MKVTLIAILTCAAVLVLHTTAA). A propeptide spanning residues 23 to 48 (EEFEAESQLMEVGMPDTELAAVDEER) is cleaved from the precursor. 3 disulfides stabilise this stretch: cysteine 52–cysteine 66, cysteine 56–cysteine 77, and cysteine 71–cysteine 82.

Belongs to the neurotoxin 12 (Hwtx-2) family. 02 (Hwtx-2) subfamily. Monomer. As to expression, expressed by the venom gland.

The protein resides in the secreted. In terms of biological role, neurotoxin active on both insects and mammals. This Cyriopagopus hainanus (Chinese bird spider) protein is U4-theraphotoxin-Hhn1a.